The chain runs to 218 residues: 3-dehydroquinate dehydratase (218 aa).

3-dehydroquinate-binding positions include 29–31 (EFR) and arginine 56. Catalysis depends on histidine 116, which acts as the Proton donor/acceptor. Lysine 142 serves as the catalytic Schiff-base intermediate with substrate. 3-dehydroquinate is bound by residues arginine 180, serine 200, and glutamine 204.

It belongs to the type-I 3-dehydroquinase family. Homodimer.

It carries out the reaction 3-dehydroquinate = 3-dehydroshikimate + H2O. It participates in metabolic intermediate biosynthesis; chorismate biosynthesis; chorismate from D-erythrose 4-phosphate and phosphoenolpyruvate: step 3/7. Functionally, involved in the third step of the chorismate pathway, which leads to the biosynthesis of aromatic amino acids. Catalyzes the cis-dehydration of 3-dehydroquinate (DHQ) and introduces the first double bond of the aromatic ring to yield 3-dehydroshikimate. This is 3-dehydroquinate dehydratase from Methanococcus vannielii (strain ATCC 35089 / DSM 1224 / JCM 13029 / OCM 148 / SB).